We begin with the raw amino-acid sequence, 388 residues long: Flap endonuclease 1 (388 aa).

The segment at Met1–Arg104 is N-domain. Mg(2+) is bound at residue Asp34. DNA-binding residues include Arg47 and Arg70. Mg(2+)-binding residues include Asp86, Glu158, Glu160, Asp179, and Asp181. The segment at Gln122–Tyr253 is I-domain. A DNA-binding site is contributed by Glu158. Residues Gly231 and Asp233 each coordinate DNA. Asp233 is a Mg(2+) binding site. The segment at Thr336–Phe344 is interaction with PCNA. The disordered stretch occupies residues Ala355–Lys388.

The protein belongs to the XPG/RAD2 endonuclease family. FEN1 subfamily. As to quaternary structure, interacts with PCNA. Three molecules of FEN1 bind to one PCNA trimer with each molecule binding to one PCNA monomer. PCNA stimulates the nuclease activity without altering cleavage specificity. Requires Mg(2+) as cofactor. Phosphorylated. Phosphorylation upon DNA damage induces relocalization to the nuclear plasma.

Its subcellular location is the nucleus. The protein resides in the nucleolus. The protein localises to the nucleoplasm. It is found in the mitochondrion. In terms of biological role, structure-specific nuclease with 5'-flap endonuclease and 5'-3' exonuclease activities involved in DNA replication and repair. During DNA replication, cleaves the 5'-overhanging flap structure that is generated by displacement synthesis when DNA polymerase encounters the 5'-end of a downstream Okazaki fragment. It enters the flap from the 5'-end and then tracks to cleave the flap base, leaving a nick for ligation. Also involved in the long patch base excision repair (LP-BER) pathway, by cleaving within the apurinic/apyrimidinic (AP) site-terminated flap. Acts as a genome stabilization factor that prevents flaps from equilibrating into structures that lead to duplications and deletions. Also possesses 5'-3' exonuclease activity on nicked or gapped double-stranded DNA, and exhibits RNase H activity. Also involved in replication and repair of rDNA and in repairing mitochondrial DNA. This is Flap endonuclease 1 from Drosophila grimshawi (Hawaiian fruit fly).